The primary structure comprises 507 residues: ATP synthase subunit alpha, mitochondrial (507 aa).

Residue 171 to 178 (GDRQTGKT) coordinates ATP.

Belongs to the ATPase alpha/beta chains family. In terms of assembly, F-type ATPases have 2 components, CF(1) - the catalytic core - and CF(0) - the membrane proton channel. CF(1) has five subunits: alpha(3), beta(3), gamma(1), delta(1), epsilon(1). CF(0) has three main subunits: a, b and c.

The protein localises to the mitochondrion. Its subcellular location is the mitochondrion inner membrane. Functionally, mitochondrial membrane ATP synthase (F(1)F(0) ATP synthase or Complex V) produces ATP from ADP in the presence of a proton gradient across the membrane which is generated by electron transport complexes of the respiratory chain. F-type ATPases consist of two structural domains, F(1) - containing the extramembraneous catalytic core, and F(0) - containing the membrane proton channel, linked together by a central stalk and a peripheral stalk. During catalysis, ATP synthesis in the catalytic domain of F(1) is coupled via a rotary mechanism of the central stalk subunits to proton translocation. Subunits alpha and beta form the catalytic core in F(1). Rotation of the central stalk against the surrounding alpha(3)beta(3) subunits leads to hydrolysis of ATP in three separate catalytic sites on the beta subunits. Subunit alpha does not bear the catalytic high-affinity ATP-binding sites. The polypeptide is ATP synthase subunit alpha, mitochondrial (ATPA) (Raphanus sativus (Radish)).